We begin with the raw amino-acid sequence, 147 residues long: Nucleoside diphosphate kinase (147 aa).

Residues Lys9, Phe57, Arg85, Thr91, Arg102, and Asn112 each contribute to the ATP site. Catalysis depends on His115, which acts as the Pros-phosphohistidine intermediate.

It belongs to the NDK family. As to quaternary structure, homotetramer. Requires Mg(2+) as cofactor.

The protein resides in the cytoplasm. It catalyses the reaction a 2'-deoxyribonucleoside 5'-diphosphate + ATP = a 2'-deoxyribonucleoside 5'-triphosphate + ADP. It carries out the reaction a ribonucleoside 5'-diphosphate + ATP = a ribonucleoside 5'-triphosphate + ADP. Its function is as follows. Major role in the synthesis of nucleoside triphosphates other than ATP. The ATP gamma phosphate is transferred to the NDP beta phosphate via a ping-pong mechanism, using a phosphorylated active-site intermediate. This Listeria welshimeri serovar 6b (strain ATCC 35897 / DSM 20650 / CCUG 15529 / CIP 8149 / NCTC 11857 / SLCC 5334 / V8) protein is Nucleoside diphosphate kinase.